The chain runs to 392 residues: Succinate--CoA ligase [ADP-forming] subunit beta (392 aa).

Positions 9–248 (KDILRKFGVA…TNEEDPFEVE (240 aa)) constitute an ATP-grasp domain. ATP-binding positions include K50, 57 to 59 (GRG), E103, M106, and E111. Mg(2+) contacts are provided by N203 and D217. Substrate-binding positions include N268 and 325–327 (GIV).

The protein belongs to the succinate/malate CoA ligase beta subunit family. As to quaternary structure, heterotetramer of two alpha and two beta subunits. It depends on Mg(2+) as a cofactor.

The enzyme catalyses succinate + ATP + CoA = succinyl-CoA + ADP + phosphate. It catalyses the reaction GTP + succinate + CoA = succinyl-CoA + GDP + phosphate. The protein operates within carbohydrate metabolism; tricarboxylic acid cycle; succinate from succinyl-CoA (ligase route): step 1/1. Functionally, succinyl-CoA synthetase functions in the citric acid cycle (TCA), coupling the hydrolysis of succinyl-CoA to the synthesis of either ATP or GTP and thus represents the only step of substrate-level phosphorylation in the TCA. The beta subunit provides nucleotide specificity of the enzyme and binds the substrate succinate, while the binding sites for coenzyme A and phosphate are found in the alpha subunit. The sequence is that of Succinate--CoA ligase [ADP-forming] subunit beta from Pelodictyon phaeoclathratiforme (strain DSM 5477 / BU-1).